The sequence spans 425 residues: Alpha-N-acetylgalactosaminidase (425 aa).

Residues 29-30 (NR), glutamate 51, 99-102 (WLTH), 119-120 (EV), and asparagine 148 contribute to the NAD(+) site. Tyrosine 177 is a binding site for substrate. Residues 194–198 (FHNHW) and tyrosine 211 contribute to the NAD(+) site. Residues 211-214 (YPTH) and tyrosine 293 each bind substrate.

This sequence belongs to the Gfo/Idh/MocA family. Glycosyl hydrolase 109 subfamily. NAD(+) serves as cofactor.

The enzyme catalyses Cleavage of non-reducing alpha-(1-&gt;3)-N-acetylgalactosamine residues from human blood group A and AB mucin glycoproteins, Forssman hapten and blood group A lacto series glycolipids.. Functionally, glycosidase that has specific alpha-N-acetylgalactosaminidase activity. This is Alpha-N-acetylgalactosaminidase from Bacteroides fragilis (strain ATCC 25285 / DSM 2151 / CCUG 4856 / JCM 11019 / LMG 10263 / NCTC 9343 / Onslow / VPI 2553 / EN-2).